A 130-amino-acid chain; its full sequence is MWRNASMNHSKRNDANDFDSMDEWLRQFFEDPFAWYDETLPIDLYETSQQYIIEADLTFLQPTQVTVTLSGCEFILTVKSSGQTFEKQMMLPFYFNDKNIQVECENQILTVAVNKETEDGSSFSLQFPLS.

Functionally, involved in spore outer coat assembly. May be part of a cross-linked insoluble skeleton that surrounds the spore, serves as a matrix for the assembly of additional outer coat material, and confers structural stability to the final structure. In Bacillus subtilis (strain 168), this protein is Spore coat protein M (cotM).